The sequence spans 160 residues: 2-C-methyl-D-erythritol 2,4-cyclodiphosphate synthase (160 aa).

Positions 12 and 14 each coordinate a divalent metal cation. 4-CDP-2-C-methyl-D-erythritol 2-phosphate is bound by residues 12–14 (DVH) and 38–39 (HS). His-46 is a binding site for a divalent metal cation. Residues 60-62 (DIG), 65-69 (FPDTD), 136-139 (TTTE), Phe-143, and Arg-146 each bind 4-CDP-2-C-methyl-D-erythritol 2-phosphate.

Belongs to the IspF family. In terms of assembly, homotrimer. A divalent metal cation is required as a cofactor.

The catalysed reaction is 4-CDP-2-C-methyl-D-erythritol 2-phosphate = 2-C-methyl-D-erythritol 2,4-cyclic diphosphate + CMP. The protein operates within isoprenoid biosynthesis; isopentenyl diphosphate biosynthesis via DXP pathway; isopentenyl diphosphate from 1-deoxy-D-xylulose 5-phosphate: step 4/6. Its function is as follows. Involved in the biosynthesis of isopentenyl diphosphate (IPP) and dimethylallyl diphosphate (DMAPP), two major building blocks of isoprenoid compounds. Catalyzes the conversion of 4-diphosphocytidyl-2-C-methyl-D-erythritol 2-phosphate (CDP-ME2P) to 2-C-methyl-D-erythritol 2,4-cyclodiphosphate (ME-CPP) with a corresponding release of cytidine 5-monophosphate (CMP). The polypeptide is 2-C-methyl-D-erythritol 2,4-cyclodiphosphate synthase (Acinetobacter baumannii (strain AB307-0294)).